We begin with the raw amino-acid sequence, 138 residues long: Large ribosomal subunit protein uL16 (138 aa).

The protein belongs to the universal ribosomal protein uL16 family. As to quaternary structure, part of the 50S ribosomal subunit.

Its function is as follows. Binds 23S rRNA and is also seen to make contacts with the A and possibly P site tRNAs. In Chlamydia caviae (strain ATCC VR-813 / DSM 19441 / 03DC25 / GPIC) (Chlamydophila caviae), this protein is Large ribosomal subunit protein uL16.